The chain runs to 307 residues: Transcription initiation factor IIB (307 aa).

The TFIIB-type zinc finger occupies 11 to 42 (FTEECPACGSAEIVFDEERGEYVCANCGLVTE). Residues Cys15, Cys18, Cys34, and Cys37 each contribute to the Zn(2+) site. The interval 48–69 (PGPEWRHFNPDQRQRRSRTGEP) is disordered. Residues 50–69 (PEWRHFNPDQRQRRSRTGEP) are compositionally biased toward basic and acidic residues. 2 repeat units span residues 123 to 207 (LELE…QRRL) and 218 to 299 (DHLP…EICE).

Belongs to the TFIIB family.

Its function is as follows. Stabilizes TBP binding to an archaeal box-A promoter. Also responsible for recruiting RNA polymerase II to the pre-initiation complex (DNA-TBP-TFIIB). In Methanopyrus kandleri (strain AV19 / DSM 6324 / JCM 9639 / NBRC 100938), this protein is Transcription initiation factor IIB.